Consider the following 138-residue polypeptide: Large ribosomal subunit protein uL16 (138 aa).

It belongs to the universal ribosomal protein uL16 family. As to quaternary structure, part of the 50S ribosomal subunit.

Its function is as follows. Binds 23S rRNA and is also seen to make contacts with the A and possibly P site tRNAs. The polypeptide is Large ribosomal subunit protein uL16 (Rubrobacter xylanophilus (strain DSM 9941 / JCM 11954 / NBRC 16129 / PRD-1)).